The sequence spans 435 residues: ATP-dependent RNA helicase RhlB (435 aa).

The Q motif motif lies at 9–37; that stretch reads QKFADFSLQTEIKTALNESGFEYCTPIQA. The region spanning 40–219 is the Helicase ATP-binding domain; the sequence is LPILLQKKDI…YDHMNEPEKV (180 aa). 53 to 60 lines the ATP pocket; sequence AQTGTGKT. Residues 165-168 carry the DEAD box motif; sequence DEAD. One can recognise a Helicase C-terminal domain in the interval 243 to 390; the sequence is KMRLLLTLLE…VTNYDSEALL (148 aa). Residues 395–435 form a disordered region; it reads APVRVHRKHNSRPQGRSGSGGKPRSGNRNAPRRHDKTRRHS. A compositionally biased stretch (basic residues) spans 424–435; that stretch reads APRRHDKTRRHS.

This sequence belongs to the DEAD box helicase family. RhlB subfamily. As to quaternary structure, component of the RNA degradosome, which is a multiprotein complex involved in RNA processing and mRNA degradation.

Its subcellular location is the cytoplasm. The enzyme catalyses ATP + H2O = ADP + phosphate + H(+). Functionally, DEAD-box RNA helicase involved in RNA degradation. Has RNA-dependent ATPase activity and unwinds double-stranded RNA. The sequence is that of ATP-dependent RNA helicase RhlB from Shewanella sediminis (strain HAW-EB3).